A 1475-amino-acid polypeptide reads, in one-letter code: Sterol 3-beta-glucosyltransferase (1475 aa).

Disordered stretches follow at residues 1–73 (MPPP…PPMF) and 94–218 (HDRF…EDDK). The segment covering 8–17 (LPLHGPAGAA) has biased composition (low complexity). The segment covering 30–40 (RVGKKLQKKRH) has biased composition (basic residues). The span at 108-118 (GPQRDSADRSH) shows a compositional bias: basic and acidic residues. The segment covering 156–168 (EKHKRKISGHKLL) has biased composition (basic residues). Residues 270–315 (QDIFEFDQPEAVIEEYPCWLLQSVLLQGYMYITAKHICFYSYLPKK) enclose the GRAM 1 domain. Positions 318–413 (EVVKSGYLSK…WVKSLQRVIF (96 aa)) constitute a PH domain. 3 disordered regions span residues 492 to 541 (ARLK…TTNK), 594 to 636 (SSPR…MEEP), and 653 to 715 (QILR…PVTP). Over residues 505–531 (QQQQQQHPMQPPMQASARSSMSGSRRA) the composition is skewed to low complexity. Composition is skewed to polar residues over residues 621 to 634 (QQGS…SSME) and 653 to 674 (QILR…SASR). Residues 675–686 (TEVEKQQRRDPR) are compositionally biased toward basic and acidic residues. The 104-residue stretch at 798 to 901 (RFRAHFALPE…RDDCAVTLLQ (104 aa)) folds into the GRAM 2 domain. Residues serine 989, arginine 990, aspartate 992, alanine 1293, histidine 1295, histidine 1308, serine 1311, glycine 1312, threonine 1313, aspartate 1332, and glutamine 1333 each coordinate UDP-alpha-D-glucose. A disordered region spans residues 1413–1475 (IQVEPDEDEE…RVSPSQQSVA (63 aa)). Over residues 1416 to 1425 (EPDEDEESAE) the composition is skewed to acidic residues.

It belongs to the glycosyltransferase 28 family.

It localises to the cytoplasm. The protein localises to the preautophagosomal structure membrane. It carries out the reaction a sterol + UDP-alpha-D-glucose = a sterol 3-beta-D-glucoside + UDP + H(+). It catalyses the reaction ergosterol + UDP-alpha-D-glucose = ergosteryl 3-beta-D-glucoside + UDP + H(+). Its function is as follows. Sterol glycosyltransferase responsible for the glycosylation of ergosterol to form ergosterol-glucoside. Mediates autophagic degradation of peroxisomes (pexophagy) and is involved in pathogenesis via peroxisome degradation inside appressoria that are developing into the host invasion stage. The chain is Sterol 3-beta-glucosyltransferase from Glomerella lagenarium (Anthracnose fungus).